Here is a 463-residue protein sequence, read N- to C-terminus: ATP synthase subunit beta (463 aa).

Position 152–159 (152–159) interacts with ATP; it reads GGAGVGKT.

This sequence belongs to the ATPase alpha/beta chains family. As to quaternary structure, F-type ATPases have 2 components, CF(1) - the catalytic core - and CF(0) - the membrane proton channel. CF(1) has five subunits: alpha(3), beta(3), gamma(1), delta(1), epsilon(1). CF(0) has three main subunits: a(1), b(2) and c(9-12). The alpha and beta chains form an alternating ring which encloses part of the gamma chain. CF(1) is attached to CF(0) by a central stalk formed by the gamma and epsilon chains, while a peripheral stalk is formed by the delta and b chains.

It is found in the cell inner membrane. It catalyses the reaction ATP + H2O + 4 H(+)(in) = ADP + phosphate + 5 H(+)(out). Functionally, produces ATP from ADP in the presence of a proton gradient across the membrane. The catalytic sites are hosted primarily by the beta subunits. This Shewanella baltica (strain OS223) protein is ATP synthase subunit beta.